Here is a 171-residue protein sequence, read N- to C-terminus: 3-hydroxydecanoyl-[acyl-carrier-protein] dehydratase (171 aa).

Residue His70 is part of the active site.

Belongs to the thioester dehydratase family. FabA subfamily. Homodimer.

It localises to the cytoplasm. It catalyses the reaction a (3R)-hydroxyacyl-[ACP] = a (2E)-enoyl-[ACP] + H2O. The catalysed reaction is (3R)-hydroxydecanoyl-[ACP] = (2E)-decenoyl-[ACP] + H2O. It carries out the reaction (2E)-decenoyl-[ACP] = (3Z)-decenoyl-[ACP]. Its pathway is lipid metabolism; fatty acid biosynthesis. In terms of biological role, necessary for the introduction of cis unsaturation into fatty acids. Catalyzes the dehydration of (3R)-3-hydroxydecanoyl-ACP to E-(2)-decenoyl-ACP and then its isomerization to Z-(3)-decenoyl-ACP. Can catalyze the dehydratase reaction for beta-hydroxyacyl-ACPs with saturated chain lengths up to 16:0, being most active on intermediate chain length. The chain is 3-hydroxydecanoyl-[acyl-carrier-protein] dehydratase from Stutzerimonas stutzeri (strain A1501) (Pseudomonas stutzeri).